A 230-amino-acid chain; its full sequence is Lipoprotein-releasing system ATP-binding protein LolD (230 aa).

The 219-residue stretch at Leu10–Leu228 folds into the ABC transporter domain. Gly46–Ser53 is an ATP binding site.

It belongs to the ABC transporter superfamily. Lipoprotein translocase (TC 3.A.1.125) family. As to quaternary structure, the complex is composed of two ATP-binding proteins (LolD) and two transmembrane proteins (LolC and LolE).

The protein resides in the cell inner membrane. Its function is as follows. Part of the ABC transporter complex LolCDE involved in the translocation of mature outer membrane-directed lipoproteins, from the inner membrane to the periplasmic chaperone, LolA. Responsible for the formation of the LolA-lipoprotein complex in an ATP-dependent manner. This chain is Lipoprotein-releasing system ATP-binding protein LolD, found in Bordetella avium (strain 197N).